The following is a 525-amino-acid chain: Peptide chain release factor 3 (525 aa).

In terms of domain architecture, tr-type G spans 9-276; sequence AKRRTFAIIS…GFTRYAPAPQ (268 aa). Residues 18-25, 86-90, and 140-143 each bind GTP; these read SHPDAGKT, DTPGH, and NKFD.

The protein belongs to the TRAFAC class translation factor GTPase superfamily. Classic translation factor GTPase family. PrfC subfamily.

It localises to the cytoplasm. Its function is as follows. Increases the formation of ribosomal termination complexes and stimulates activities of RF-1 and RF-2. It binds guanine nucleotides and has strong preference for UGA stop codons. It may interact directly with the ribosome. The stimulation of RF-1 and RF-2 is significantly reduced by GTP and GDP, but not by GMP. This Francisella tularensis subsp. tularensis (strain FSC 198) protein is Peptide chain release factor 3.